Reading from the N-terminus, the 435-residue chain is 5-hydroxybenzimidazole synthase (435 aa).

Residues Met95, Tyr124, His163, 186–188, 227–230, and Glu266 each bind substrate; these read SKG and NGLR. Residue His270 participates in Zn(2+) binding. Substrate is bound at residue Tyr293. His334 contacts Zn(2+). 3 residues coordinate [4Fe-4S] cluster: Cys410, Cys413, and Cys417.

This sequence belongs to the ThiC family. 5-hydroxybenzimidazole synthase subfamily. As to quaternary structure, homodimer. It depends on [4Fe-4S] cluster as a cofactor.

The enzyme catalyses 5-amino-1-(5-phospho-beta-D-ribosyl)imidazole + AH2 + S-adenosyl-L-methionine = 5-hydroxybenzimidazole + 5'-deoxyadenosine + formate + L-methionine + A + NH4(+) + phosphate + 2 H(+). In terms of biological role, catalyzes the conversion of aminoimidazole ribotide (AIR) to 5-hydroxybenzimidazole (5-HBI) in a radical S-adenosyl-L-methionine (SAM)-dependent reaction. Is thus involved in the anaerobic biosynthesis of the benzimidazole lower axial ligand of the cobamide produced by G.sulfurreducens. The sequence is that of 5-hydroxybenzimidazole synthase from Geobacter sulfurreducens (strain ATCC 51573 / DSM 12127 / PCA).